The primary structure comprises 636 residues: MNSNSTIGRTTLGESDTISLSFSEPSSSLNSRSTDVVFASTSTLVPQQGSLTSLPPVSSTATPTYYSTSLTYDETLHTSIDVSSTSTLVSSTDSSSSSEQDTYSSQYDPATSSYSIITPSMSIFSSTSPMSSSSSITSEWSSLTSTTPTLSSSATSLSSSWSSLSSPSSLLVSSSLSLSLSSSYSDTKLFSFDSRSSIFSPSTPTVISPSYTYLSSISATSFQISTTSELSSSWFSTISSPSTISNKDTTFPSSSRNTSTSFYSSSLSSTNDFSTISKSSKLSPSASSSTVSISTISVPTSSSVSSSSSKVPSNRPSSSSSSDDTTSAYSSTYTFQSLQSTTSSSIPPTTQTPSTSTISTSPIPTSSQVFNTVAISSSEDSKTIYYFYTQTYDITDSSTTFVTGLPTTIAVAKSEVTSFSAPSSTITADMSFYQHWLDGSLDNNKNQGTSKTNTGTIVGSVVGSVGGILICVLVVWFMLVRKRKAKRHFKENDSFCHEIGRRTGFPTTAQAKEASLQAQDSGSQQRNTETASANNPFSNEFNFKARGNPPPVPPPRNVTAMNGSFQNMRSNFMDQENRFSYGSSFTYSSLGSSTQGGFSTLSSNSIRLGRGLDNDISHDERNTVQNNSQGFLREII.

Over residues 1 to 18 (MNSNSTIGRTTLGESDTI) the composition is skewed to polar residues. Disordered stretches follow at residues 1–33 (MNSNSTIGRTTLGESDTISLSFSEPSSSLNSRS), 87–109 (TLVSSTDSSSSSEQDTYSSQYDP), 246–271 (NKDTTFPSSSRNTSTSFYSSSLSSTN), 299–326 (PTSSSVSSSSSKVPSNRPSSSSSSDDTT), and 339–362 (QSTTSSSIPPTTQTPSTSTISTSP). Asparagine 4 carries an N-linked (GlcNAc...) asparagine glycan. 2 stretches are compositionally biased toward low complexity: residues 19–33 (SLSFSEPSSSLNSRS) and 87–108 (TLVSSTDSSSSSEQDTYSSQYD). Asparagine 257 carries an N-linked (GlcNAc...) asparagine glycan. The chain crosses the membrane as a helical span at residues 457 to 477 (IVGSVVGSVGGILICVLVVWF). Asparagine 492 is a glycosylation site (N-linked (GlcNAc...) asparagine). Residues 510–541 (QAKEASLQAQDSGSQQRNTETASANNPFSNEF) show a composition bias toward polar residues. The segment at 510–551 (QAKEASLQAQDSGSQQRNTETASANNPFSNEFNFKARGNPPP) is disordered. A Glycyl lysine isopeptide (Lys-Gly) (interchain with G-Cter in ubiquitin) cross-link involves residue lysine 512. Asparagine 557, asparagine 562, and asparagine 626 each carry an N-linked (GlcNAc...) asparagine glycan. Serine 628 is modified (phosphoserine).

The protein belongs to the TDA7 family.

The protein resides in the vacuole membrane. The sequence is that of Topoisomerase I damage affected protein 7 (TDA7) from Saccharomyces cerevisiae (strain ATCC 204508 / S288c) (Baker's yeast).